We begin with the raw amino-acid sequence, 483 residues long: Glutamate mutase epsilon subunit (483 aa).

An L-glutamate-binding site is contributed by Arg66. Gly68 is an adenosylcob(III)alamin binding site. Residue Arg100 participates in L-glutamate binding. Asn123 is a binding site for adenosylcob(III)alamin. L-glutamate-binding positions include 149 to 150 (RH), Glu171, and Tyr177. Residue Pro180 coordinates adenosylcob(III)alamin. Tyr181 serves as a coordination point for L-glutamate. Adenosylcob(III)alamin contacts are provided by Phe297, Lys326, Glu330, and Ile334.

The protein belongs to the methylaspartate mutase GlmE subunit family. In terms of assembly, heterotetramer composed of 2 epsilon subunits (GlmE) and 2 sigma subunits (GlmS). GlmE exists as a homodimer and GlmS as a monomer. Adenosylcob(III)alamin is required as a cofactor.

The catalysed reaction is (2S,3S)-3-methyl-L-aspartate = L-glutamate. It functions in the pathway amino-acid degradation; L-glutamate degradation via mesaconate pathway; acetate and pyruvate from L-glutamate: step 1/4. With respect to regulation, competitively inhibited by (2S,4S)-4-fluoroglutamate, 2-methyleneglutarate, (2R,3RS)-3-fluoroglutamate and (S)-3-methylitaconate. Its function is as follows. Catalyzes the carbon skeleton rearrangement of L-glutamate to L-threo-3-methylaspartate ((2S,3S)-3-methylaspartate). This is Glutamate mutase epsilon subunit from Clostridium cochlearium.